A 478-amino-acid chain; its full sequence is Aspartyl/glutamyl-tRNA(Asn/Gln) amidotransferase subunit B (478 aa).

This sequence belongs to the GatB/GatE family. GatB subfamily. In terms of assembly, heterotrimer of A, B and C subunits.

The catalysed reaction is L-glutamyl-tRNA(Gln) + L-glutamine + ATP + H2O = L-glutaminyl-tRNA(Gln) + L-glutamate + ADP + phosphate + H(+). The enzyme catalyses L-aspartyl-tRNA(Asn) + L-glutamine + ATP + H2O = L-asparaginyl-tRNA(Asn) + L-glutamate + ADP + phosphate + 2 H(+). Allows the formation of correctly charged Asn-tRNA(Asn) or Gln-tRNA(Gln) through the transamidation of misacylated Asp-tRNA(Asn) or Glu-tRNA(Gln) in organisms which lack either or both of asparaginyl-tRNA or glutaminyl-tRNA synthetases. The reaction takes place in the presence of glutamine and ATP through an activated phospho-Asp-tRNA(Asn) or phospho-Glu-tRNA(Gln). This is Aspartyl/glutamyl-tRNA(Asn/Gln) amidotransferase subunit B from Brevibacillus brevis (strain 47 / JCM 6285 / NBRC 100599).